Here is a 97-residue protein sequence, read N- to C-terminus: Sperm protein associated with the nucleus on the X chromosome A (97 aa).

The interval 1–49 (MDKQSSAGGVKRSVPCDSNEANEMMPETPTGDSDPQPAPKKMKTSESST) is disordered. The Nuclear localization signal signature appears at 37-45 (PAPKKMKTS).

The protein belongs to the SPAN-X family. Detected in testis and sperm.

It localises to the cytoplasm. The protein resides in the nucleus. The polypeptide is Sperm protein associated with the nucleus on the X chromosome A (Homo sapiens (Human)).